Reading from the N-terminus, the 466-residue chain is Cysteine--tRNA ligase (466 aa).

Cys-27 lines the Zn(2+) pocket. Positions Pro-29–His-39 match the 'HIGH' region motif. Positions 208, 238, and 242 each coordinate Zn(2+). The 'KMSKS' region signature appears at Lys-270–Ser-274. Lys-273 contacts ATP.

It belongs to the class-I aminoacyl-tRNA synthetase family. Monomer. Requires Zn(2+) as cofactor.

Its subcellular location is the cytoplasm. It catalyses the reaction tRNA(Cys) + L-cysteine + ATP = L-cysteinyl-tRNA(Cys) + AMP + diphosphate. In Sulfurimonas denitrificans (strain ATCC 33889 / DSM 1251) (Thiomicrospira denitrificans (strain ATCC 33889 / DSM 1251)), this protein is Cysteine--tRNA ligase.